A 78-amino-acid chain; its full sequence is Large ribosomal subunit protein bL28 (78 aa).

The disordered stretch occupies residues 1 to 20 (MSRVCQVTGKRPVTGNNRSH).

Belongs to the bacterial ribosomal protein bL28 family.

The polypeptide is Large ribosomal subunit protein bL28 (Vibrio atlanticus (strain LGP32) (Vibrio splendidus (strain Mel32))).